The sequence spans 345 residues: Probable dual-specificity RNA methyltransferase RlmN (345 aa).

The active-site Proton acceptor is Glu-90. The Radical SAM core domain maps to 96-326 (YDYGNSICIS…STIRKEMGAD (231 aa)). Residues Cys-103 and Cys-331 are joined by a disulfide bond. Residues Cys-110, Cys-114, and Cys-117 each contribute to the [4Fe-4S] cluster site. S-adenosyl-L-methionine contacts are provided by residues 157–158 (GE), Ser-189, 212–214 (SLH), and Asn-288. Cys-331 (S-methylcysteine intermediate) is an active-site residue.

It belongs to the radical SAM superfamily. RlmN family. It depends on [4Fe-4S] cluster as a cofactor.

The protein localises to the cytoplasm. It catalyses the reaction adenosine(2503) in 23S rRNA + 2 reduced [2Fe-2S]-[ferredoxin] + 2 S-adenosyl-L-methionine = 2-methyladenosine(2503) in 23S rRNA + 5'-deoxyadenosine + L-methionine + 2 oxidized [2Fe-2S]-[ferredoxin] + S-adenosyl-L-homocysteine. It carries out the reaction adenosine(37) in tRNA + 2 reduced [2Fe-2S]-[ferredoxin] + 2 S-adenosyl-L-methionine = 2-methyladenosine(37) in tRNA + 5'-deoxyadenosine + L-methionine + 2 oxidized [2Fe-2S]-[ferredoxin] + S-adenosyl-L-homocysteine. Specifically methylates position 2 of adenine 2503 in 23S rRNA and position 2 of adenine 37 in tRNAs. In Clostridium acetobutylicum (strain ATCC 824 / DSM 792 / JCM 1419 / IAM 19013 / LMG 5710 / NBRC 13948 / NRRL B-527 / VKM B-1787 / 2291 / W), this protein is Probable dual-specificity RNA methyltransferase RlmN.